The following is a 415-amino-acid chain: Corticotropin-releasing factor receptor 1 (415 aa).

The first 23 residues, 1–23, serve as a signal peptide directing secretion; that stretch reads MGQRPQLRLVKALLLLGLNPVST. Residues 24 to 111 are Extracellular-facing; it reads SLQDQQCESL…CQEILNEEKK (88 aa). Disulfide bonds link Cys-30-Cys-54, Cys-44-Cys-87, and Cys-68-Cys-102. N-linked (GlcNAc...) asparagine glycosylation is found at Asn-38, Asn-45, Asn-78, Asn-90, and Asn-98. Positions 99 to 108 are important for peptide agonist binding; sequence YSECQEILNE. The helical transmembrane segment at 112 to 142 threads the bilayer; the sequence is SKVHYHIAVIINYLGHCISLVALLVAFVLFL. The Cytoplasmic portion of the chain corresponds to 143–149; the sequence is RLRSIRC. The chain crosses the membrane as a helical span at residues 150 to 174; the sequence is LRNIIHWNLISAFILRNATWFVVQL. At 175–189 the chain is on the extracellular side; it reads TVSPEVHQSNVAWCR. Residues Cys-188 and Cys-258 are joined by a disulfide bond. A helical transmembrane segment spans residues 190 to 218; sequence LVTAAYNYFHVTNFFWMFGEGCYLHTAIV. The Cytoplasmic portion of the chain corresponds to 219 to 225; that stretch reads LTYSTDR. The chain crosses the membrane as a helical span at residues 226–253; sequence LRKWMFVCIGWGVPFPIIVAWAIGKLYY. The Extracellular segment spans residues 254–269; that stretch reads DNEKCWFGKRPGVYTD. A helical transmembrane segment spans residues 270 to 295; sequence YIYQGPMILVLLINFIFLFNIVRILM. Residues 280–290 are important for antagonist binding; the sequence is LLINFIFLFNI. Residues 296–306 lie on the Cytoplasmic side of the membrane; that stretch reads TKLRASTTSET. The residue at position 301 (Ser-301) is a Phosphoserine; by PKA. The helical transmembrane segment at 307-331 threads the bilayer; sequence IQYRKAVKATLVLLPLLGITYMLFF. At 332-338 the chain is on the extracellular side; the sequence is VNPGEDE. The helical transmembrane segment at 339–368 threads the bilayer; the sequence is VSRVVFIYFNSFLESFQGFFVSVFYCFLNS. The Cytoplasmic segment spans residues 369–415; the sequence is EVRSAIRKRWRRWQDKHSIRARVARAMSIPTSPTRVSFHSIKQSTAV.

It belongs to the G-protein coupled receptor 2 family. Heterodimer; heterodimerizes with GPER1. Interacts (via N-terminal extracellular domain) with CRH and UCN. Interacts with DLG1; this inhibits endocytosis of CRHR1 after agonist binding. Post-translationally, C-terminal Ser or Thr residues may be phosphorylated. In terms of processing, phosphorylation at Ser-301 by PKA prevents maximal coupling to Gq-protein, and thereby negatively regulates downstream signaling. As to expression, detected in brain cortex (at protein level).

The protein resides in the cell membrane. It is found in the endosome. G-protein coupled receptor for CRH (corticotropin-releasing factor) and UCN (urocortin). Has high affinity for CRH and UCN. Ligand binding causes a conformation change that triggers signaling via guanine nucleotide-binding proteins (G proteins) and down-stream effectors, such as adenylate cyclase. Promotes the activation of adenylate cyclase, leading to increased intracellular cAMP levels. Inhibits the activity of the calcium channel CACNA1H. Required for normal embryonic development of the adrenal gland and for normal hormonal responses to stress. Plays a role in the response to anxiogenic stimuli. This chain is Corticotropin-releasing factor receptor 1 (Crhr1), found in Mus musculus (Mouse).